The primary structure comprises 133 residues: Global transcriptional regulator Spx (133 aa).

Cys-10 and Cys-13 are oxidised to a cystine.

It belongs to the ArsC family. Spx subfamily. As to quaternary structure, interacts with the C-terminal domain of the alpha subunit of the RNAP.

The protein localises to the cytoplasm. In terms of biological role, global transcriptional regulator that plays a key role in stress response and exerts either positive or negative regulation of genes. Acts by interacting with the C-terminal domain of the alpha subunit of the RNA polymerase (RNAP). This interaction can enhance binding of RNAP to the promoter region of target genes and stimulate their transcription, or block interaction of RNAP with activator. The chain is Global transcriptional regulator Spx from Streptococcus pneumoniae serotype 4 (strain ATCC BAA-334 / TIGR4).